The chain runs to 280 residues: Formamidopyrimidine-DNA glycosylase (280 aa).

Residue proline 2 is the Schiff-base intermediate with DNA of the active site. The Proton donor role is filled by glutamate 3. The active-site Proton donor; for beta-elimination activity is lysine 59. Positions 92 and 111 each coordinate DNA. The segment at 239–273 (NVYGQTGLPCNRCGTPIVKTKVAQRGTHYCPQCQQ) adopts an FPG-type zinc-finger fold. Arginine 263 acts as the Proton donor; for delta-elimination activity in catalysis.

This sequence belongs to the FPG family. As to quaternary structure, monomer. Requires Zn(2+) as cofactor.

It carries out the reaction Hydrolysis of DNA containing ring-opened 7-methylguanine residues, releasing 2,6-diamino-4-hydroxy-5-(N-methyl)formamidopyrimidine.. The catalysed reaction is 2'-deoxyribonucleotide-(2'-deoxyribose 5'-phosphate)-2'-deoxyribonucleotide-DNA = a 3'-end 2'-deoxyribonucleotide-(2,3-dehydro-2,3-deoxyribose 5'-phosphate)-DNA + a 5'-end 5'-phospho-2'-deoxyribonucleoside-DNA + H(+). Its function is as follows. Involved in base excision repair of DNA damaged by oxidation or by mutagenic agents. Acts as a DNA glycosylase that recognizes and removes damaged bases. Has a preference for oxidized purines, such as 7,8-dihydro-8-oxoguanine (8-oxoG). Has AP (apurinic/apyrimidinic) lyase activity and introduces nicks in the DNA strand. Cleaves the DNA backbone by beta-delta elimination to generate a single-strand break at the site of the removed base with both 3'- and 5'-phosphates. The chain is Formamidopyrimidine-DNA glycosylase from Enterococcus faecalis (strain ATCC 700802 / V583).